Here is a 688-residue protein sequence, read N- to C-terminus: Elongation factor G (688 aa).

The 275-residue stretch at 8 to 282 (EKFRNIGIMA…AVVDFMPSPL (275 aa)) folds into the tr-type G domain. Residues 17-24 (AHIDAGKT), 81-85 (DTPGH), and 135-138 (NKMD) contribute to the GTP site. Positions 282–305 (LDIPPIKGTDPETGEETDRPADDN) are disordered.

The protein belongs to the TRAFAC class translation factor GTPase superfamily. Classic translation factor GTPase family. EF-G/EF-2 subfamily.

The protein resides in the cytoplasm. Catalyzes the GTP-dependent ribosomal translocation step during translation elongation. During this step, the ribosome changes from the pre-translocational (PRE) to the post-translocational (POST) state as the newly formed A-site-bound peptidyl-tRNA and P-site-bound deacylated tRNA move to the P and E sites, respectively. Catalyzes the coordinated movement of the two tRNA molecules, the mRNA and conformational changes in the ribosome. The chain is Elongation factor G from Clostridium kluyveri (strain NBRC 12016).